The primary structure comprises 92 residues: Small ribosomal subunit protein uS19 (92 aa).

This sequence belongs to the universal ribosomal protein uS19 family.

In terms of biological role, protein S19 forms a complex with S13 that binds strongly to the 16S ribosomal RNA. The sequence is that of Small ribosomal subunit protein uS19 from Pelobacter propionicus (strain DSM 2379 / NBRC 103807 / OttBd1).